Here is a 223-residue protein sequence, read N- to C-terminus: ATP phosphoribosyltransferase (223 aa).

It belongs to the ATP phosphoribosyltransferase family. Short subfamily. In terms of assembly, heteromultimer composed of HisG and HisZ subunits.

Its subcellular location is the cytoplasm. It catalyses the reaction 1-(5-phospho-beta-D-ribosyl)-ATP + diphosphate = 5-phospho-alpha-D-ribose 1-diphosphate + ATP. It functions in the pathway amino-acid biosynthesis; L-histidine biosynthesis; L-histidine from 5-phospho-alpha-D-ribose 1-diphosphate: step 1/9. In terms of biological role, catalyzes the condensation of ATP and 5-phosphoribose 1-diphosphate to form N'-(5'-phosphoribosyl)-ATP (PR-ATP). Has a crucial role in the pathway because the rate of histidine biosynthesis seems to be controlled primarily by regulation of HisG enzymatic activity. The polypeptide is ATP phosphoribosyltransferase (Halothermothrix orenii (strain H 168 / OCM 544 / DSM 9562)).